Reading from the N-terminus, the 415-residue chain is Serine hydroxymethyltransferase (415 aa).

(6S)-5,6,7,8-tetrahydrofolate is bound by residues leucine 117 and 121-123 (GHL). Lysine 226 bears the N6-(pyridoxal phosphate)lysine mark.

The protein belongs to the SHMT family. Homodimer. Pyridoxal 5'-phosphate serves as cofactor.

It localises to the cytoplasm. It carries out the reaction (6R)-5,10-methylene-5,6,7,8-tetrahydrofolate + glycine + H2O = (6S)-5,6,7,8-tetrahydrofolate + L-serine. It functions in the pathway one-carbon metabolism; tetrahydrofolate interconversion. Its pathway is amino-acid biosynthesis; glycine biosynthesis; glycine from L-serine: step 1/1. Its function is as follows. Catalyzes the reversible interconversion of serine and glycine with tetrahydrofolate (THF) serving as the one-carbon carrier. This reaction serves as the major source of one-carbon groups required for the biosynthesis of purines, thymidylate, methionine, and other important biomolecules. Also exhibits THF-independent aldolase activity toward beta-hydroxyamino acids, producing glycine and aldehydes, via a retro-aldol mechanism. The sequence is that of Serine hydroxymethyltransferase from Leptospira interrogans serogroup Icterohaemorrhagiae serovar copenhageni (strain Fiocruz L1-130).